The following is a 214-amino-acid chain: LexA repressor (214 aa).

A DNA-binding region (H-T-H motif) is located at residues 28-48; sequence IRDIQRELSISSTSVVAYNLR. Residues Ser133 and Lys172 each act as for autocatalytic cleavage activity in the active site.

This sequence belongs to the peptidase S24 family. Homodimer.

It catalyses the reaction Hydrolysis of Ala-|-Gly bond in repressor LexA.. Functionally, represses a number of genes involved in the response to DNA damage (SOS response), including recA and lexA. In the presence of single-stranded DNA, RecA interacts with LexA causing an autocatalytic cleavage which disrupts the DNA-binding part of LexA, leading to derepression of the SOS regulon and eventually DNA repair. The sequence is that of LexA repressor from Herpetosiphon aurantiacus (strain ATCC 23779 / DSM 785 / 114-95).